A 1106-amino-acid polypeptide reads, in one-letter code: Exportin-T (1106 aa).

Positions 336 to 357 (TPLESRTRTGPSAQNGQSDTSD) are disordered. Residues 343 to 357 (RTGPSAQNGQSDTSD) are compositionally biased toward polar residues.

The protein belongs to the exportin family.

It is found in the nucleus. The protein localises to the cytoplasm. In terms of biological role, tRNA nucleus export receptor which facilitates tRNA translocation across the nuclear pore complex. Involved in pre-tRNA splicing, probably by affecting the interaction of pre-tRNA with splicing endonuclease. The protein is Exportin-T (LOS1) of Mycosarcoma maydis (Corn smut fungus).